The primary structure comprises 119 residues: Ribonuclease P protein component (119 aa).

The protein belongs to the RnpA family. As to quaternary structure, consists of a catalytic RNA component (M1 or rnpB) and a protein subunit.

It catalyses the reaction Endonucleolytic cleavage of RNA, removing 5'-extranucleotides from tRNA precursor.. In terms of biological role, RNaseP catalyzes the removal of the 5'-leader sequence from pre-tRNA to produce the mature 5'-terminus. It can also cleave other RNA substrates such as 4.5S RNA. The protein component plays an auxiliary but essential role in vivo by binding to the 5'-leader sequence and broadening the substrate specificity of the ribozyme. The protein is Ribonuclease P protein component of Halalkalibacterium halodurans (strain ATCC BAA-125 / DSM 18197 / FERM 7344 / JCM 9153 / C-125) (Bacillus halodurans).